Consider the following 205-residue polypeptide: Proteasome subunit beta type-3 (205 aa).

The protein belongs to the peptidase T1B family. As to quaternary structure, the 26S proteasome consists of a 20S proteasome core and two 19S regulatory subunits. The 20S proteasome core is composed of 28 subunits that are arranged in four stacked rings, resulting in a barrel-shaped structure. The two end rings are each formed by seven alpha subunits, and the two central rings are each formed by seven beta subunits. The catalytic chamber with the active sites is on the inside of the barrel.

It is found in the cytoplasm. Its subcellular location is the nucleus. In terms of biological role, non-catalytic component of the proteasome, a multicatalytic proteinase complex which is characterized by its ability to cleave peptides with Arg, Phe, Tyr, Leu, and Glu adjacent to the leaving group at neutral or slightly basic pH. The proteasome has an ATP-dependent proteolytic activity. The polypeptide is Proteasome subunit beta type-3 (PSB3) (Trypanosoma brucei brucei).